A 212-amino-acid chain; its full sequence is Dephospho-CoA kinase (212 aa).

In terms of domain architecture, DPCK spans 8-212; it reads LVGVTGGLGS…QLLQQAMLRR (205 aa). ATP is bound at residue 16 to 21; sequence GSGKSM.

Belongs to the CoaE family.

The protein localises to the cytoplasm. It catalyses the reaction 3'-dephospho-CoA + ATP = ADP + CoA + H(+). The protein operates within cofactor biosynthesis; coenzyme A biosynthesis; CoA from (R)-pantothenate: step 5/5. Functionally, catalyzes the phosphorylation of the 3'-hydroxyl group of dephosphocoenzyme A to form coenzyme A. The protein is Dephospho-CoA kinase of Chlorobium chlorochromatii (strain CaD3).